The chain runs to 50 residues: Small ribosomal subunit protein uS14 (50 aa).

Positions 15, 18, 33, and 36 each coordinate Zn(2+).

Belongs to the universal ribosomal protein uS14 family. Zinc-binding uS14 subfamily. In terms of assembly, part of the 30S ribosomal subunit. The cofactor is Zn(2+).

Binds 16S rRNA, required for the assembly of 30S particles. The protein is Small ribosomal subunit protein uS14 of Methanococcoides burtonii (strain DSM 6242 / NBRC 107633 / OCM 468 / ACE-M).